The following is a 44-amino-acid chain: Photosystem II reaction center protein K (44 aa).

The propeptide occupies 1 to 7 (MESLLLA). A helical transmembrane segment spans residues 23–43 (FPVIPVFFLLLAFVWQAAVGF).

This sequence belongs to the PsbK family. In terms of assembly, PSII is composed of 1 copy each of membrane proteins PsbA, PsbB, PsbC, PsbD, PsbE, PsbF, PsbH, PsbI, PsbJ, PsbK, PsbL, PsbM, PsbT, PsbX, PsbY, PsbZ, Psb30/Ycf12, at least 3 peripheral proteins of the oxygen-evolving complex and a large number of cofactors. It forms dimeric complexes.

Its subcellular location is the plastid. It is found in the chloroplast thylakoid membrane. One of the components of the core complex of photosystem II (PSII). PSII is a light-driven water:plastoquinone oxidoreductase that uses light energy to abstract electrons from H(2)O, generating O(2) and a proton gradient subsequently used for ATP formation. It consists of a core antenna complex that captures photons, and an electron transfer chain that converts photonic excitation into a charge separation. This chain is Photosystem II reaction center protein K, found in Thalassiosira pseudonana (Marine diatom).